Here is a 41-residue protein sequence, read N- to C-terminus: Large ribosomal subunit protein bL36 (41 aa).

It belongs to the bacterial ribosomal protein bL36 family.

The polypeptide is Large ribosomal subunit protein bL36 (Rickettsia prowazekii (strain Madrid E)).